A 636-amino-acid chain; its full sequence is Cysteine-rich receptor-like protein kinase 24 (636 aa).

A signal peptide spans 1-20; that stretch reads MVKFLVIFWFVVISFSHVSA. 2 Gnk2-homologous domains span residues 21-124 and 130-235; these read QVCL…NRSF and MEIL…LYPF. Residues 21–254 are Extracellular-facing; it reads QVCLERSGFF…RQKDGKSIST (234 aa). 8 N-linked (GlcNAc...) asparagine glycosylation sites follow: Asn-33, Asn-50, Asn-98, Asn-101, Asn-121, Asn-137, Asn-145, and Asn-197. The helical transmembrane segment at 255-275 threads the bilayer; it reads GAIVAIIVVPILLLALGVGLW. Residues 276–636 are Cytoplasmic-facing; it reads KRRKAYKTKT…SVSVTCVSPR (361 aa). The Protein kinase domain maps to 312–585; that stretch reads FHNVNKLGHG…TMSTVFHMLT (274 aa). Residues 318–326 and Lys-340 contribute to the ATP site; that span reads LGHGGFGEV. The active-site Proton acceptor is Asp-437.

This sequence belongs to the protein kinase superfamily. Ser/Thr protein kinase family. CRK subfamily.

It is found in the membrane. The enzyme catalyses L-seryl-[protein] + ATP = O-phospho-L-seryl-[protein] + ADP + H(+). It carries out the reaction L-threonyl-[protein] + ATP = O-phospho-L-threonyl-[protein] + ADP + H(+). This chain is Cysteine-rich receptor-like protein kinase 24 (CRK24), found in Arabidopsis thaliana (Mouse-ear cress).